A 533-amino-acid chain; its full sequence is uncharacterized protein (533 aa).

4 helical membrane-spanning segments follow: residues Met-1–Ile-21, Leu-135–Leu-155, Ala-193–Ala-213, and Leu-472–Gly-492.

The protein resides in the cell membrane. This is an uncharacterized protein from Mycobacterium bovis (strain ATCC BAA-935 / AF2122/97).